A 318-amino-acid chain; its full sequence is Beta-ketoacyl-[acyl-carrier-protein] synthase III (318 aa).

Catalysis depends on residues C112 and H245. Residues 246–250 are ACP-binding; it reads QANIR. The active site involves N275.

This sequence belongs to the thiolase-like superfamily. FabH family. Homodimer.

The protein resides in the cytoplasm. It catalyses the reaction malonyl-[ACP] + acetyl-CoA + H(+) = 3-oxobutanoyl-[ACP] + CO2 + CoA. It functions in the pathway lipid metabolism; fatty acid biosynthesis. In terms of biological role, catalyzes the condensation reaction of fatty acid synthesis by the addition to an acyl acceptor of two carbons from malonyl-ACP. Catalyzes the first condensation reaction which initiates fatty acid synthesis and may therefore play a role in governing the total rate of fatty acid production. Possesses both acetoacetyl-ACP synthase and acetyl transacylase activities. Its substrate specificity determines the biosynthesis of branched-chain and/or straight-chain of fatty acids. In Nitrosomonas europaea (strain ATCC 19718 / CIP 103999 / KCTC 2705 / NBRC 14298), this protein is Beta-ketoacyl-[acyl-carrier-protein] synthase III.